A 499-amino-acid polypeptide reads, in one-letter code: Glycerol kinase (499 aa).

T11 serves as a coordination point for ADP. ATP-binding residues include T11, S12, and S13. Residue T11 participates in sn-glycerol 3-phosphate binding. R15 provides a ligand contact to ADP. Residues R81, E82, Y133, and D242 each coordinate sn-glycerol 3-phosphate. Residues R81, E82, Y133, D242, and Q243 each contribute to the glycerol site. Positions 264 and 309 each coordinate ADP. The ATP site is built by T264, G309, Q313, and G414. Positions 414 and 418 each coordinate ADP.

It belongs to the FGGY kinase family.

It carries out the reaction glycerol + ATP = sn-glycerol 3-phosphate + ADP + H(+). It functions in the pathway polyol metabolism; glycerol degradation via glycerol kinase pathway; sn-glycerol 3-phosphate from glycerol: step 1/1. With respect to regulation, inhibited by fructose 1,6-bisphosphate (FBP). Key enzyme in the regulation of glycerol uptake and metabolism. Catalyzes the phosphorylation of glycerol to yield sn-glycerol 3-phosphate. The sequence is that of Glycerol kinase from Methylibium petroleiphilum (strain ATCC BAA-1232 / LMG 22953 / PM1).